Here is a 367-residue protein sequence, read N- to C-terminus: N6-succino-2-amino-2'-deoxyadenylate synthase (367 aa).

S17 functions as the Proton acceptor in the catalytic mechanism. ATP contacts are provided by S17, T18, G19, K20, and G21. S17 is a dGMP binding site. S17 provides a ligand contact to Mg(2+). N43 provides a ligand contact to dGMP. Residues G45, H46, and T47 each contribute to the ATP site. Mg(2+) is bound at residue G45. DGMP-binding residues include S128, T129, and R143. Q197 is a binding site for ATP. Position 212 (T212) interacts with dGMP. T284 is a binding site for Mg(2+). 3 residues coordinate L-aspartate: T284, V285, and R290. ATP contacts are provided by N315, N318, and G354.

The protein belongs to the Caudovirales PurZ family. Mg(2+) serves as cofactor.

The catalysed reaction is dGMP + L-aspartate + ATP = (2S)-2-amino-2'-deoxyadenylo-succinate + ADP + phosphate + 2 H(+). It functions in the pathway purine metabolism. In terms of biological role, involved in the synthesis of the atypical nucleotide dZTP (2-amino-2'-deoxyadenosine-5'-triphosphate). Catalyzes the condensation of aspartate with deoxyguanylate into dSMP (N6-succino-2-amino-2'-deoxyadenylate), which undergoes defumarylation and phosphorylation respectively by host PurB and guanylate/nucleoside diphosphate kinases to give dZTP. dZTP is integrated into the viral genome instead of adenine by the viral DNA polymerase. This Z-base probably completely replaces adenosine and forms a triple bond to the opposite T-base. The resulting non-standard viral DNA is called Z-genome. The chemically modified DNA is probably harder for the host bacteria to digest with nucleases or restriction enzymes. In Salmonella phage PMBT28, this protein is N6-succino-2-amino-2'-deoxyadenylate synthase.